We begin with the raw amino-acid sequence, 258 residues long: Hydroxyacylglutathione hydrolase cytoplasmic (258 aa).

Zn(2+)-binding residues include His-54 and His-56. Fe cation contacts are provided by Asp-58 and His-59. The Zn(2+) site is built by His-112 and Asp-135. Asp-135 is a binding site for Fe cation. Substrate-binding positions include 144–146 and 174–176; these read KFF and HEY. His-174 contacts Fe cation.

The protein belongs to the metallo-beta-lactamase superfamily. Glyoxalase II family. In terms of assembly, homodimer. It depends on Fe(2+) as a cofactor. Zn(2+) serves as cofactor. Requires Fe(3+) as cofactor. In terms of tissue distribution, mainly expressed in flowers and flower buds. Also detected in roots and leaves.

The protein resides in the cytoplasm. It catalyses the reaction an S-(2-hydroxyacyl)glutathione + H2O = a 2-hydroxy carboxylate + glutathione + H(+). The protein operates within secondary metabolite metabolism; methylglyoxal degradation; (R)-lactate from methylglyoxal: step 2/2. Functionally, thiolesterase that catalyzes the hydrolysis of S-D-lactoyl-glutathione to form glutathione and D-lactic acid. This Arabidopsis thaliana (Mouse-ear cress) protein is Hydroxyacylglutathione hydrolase cytoplasmic (GLX2-2).